The primary structure comprises 169 residues: X polypeptide (169 aa).

It belongs to the IagB/IpgF/P19 family.

This is X polypeptide (yubQ) from Escherichia coli (strain K12).